Reading from the N-terminus, the 529-residue chain is MKKIMLVFITLILVSLPIAQQTEAKDASAFNKENSISSMAPPASPPASPKTPIEKKHADEIDKYIQGLDYNKNNVLVYHGDAVTNVPPRKGYKDGNEYIVVEKKKKSINQNNADIQVVNAISSLTYPGALVKANSELVENQPDVLPVKRDSLTLSIDLPGMTNQDNKIVVKNATKSNVNNAVNTLVERWNEKYAQAYPNVSAKIDYDDEMAYSESQLIAKFGTAFKAVNNSLNVNFGAISEGKMQEEVISFKQIYYNVNVNEPTRPSRFFGKAVTKEQLQALGVNAENPPAYISSVAYGRQVYLKLSTNSHSTKVKAAFDAAVSGKSVSGDVELTNIIKNSSFKAVIYGGSAKDEVQIIDGNLGDLRDILKKGATFNRETPGVPIAYTTNFLKDNELAVIKNNSEYIETTSKAYTDGKINIDHSGGYVAQFNISWDEVNYDPEGNEIVQHKNWSENNKSKLAHFTSSIYLPGNARNINVYAKECTGLAWEWWRTVIDDRNLPLVKNRNISIWGTTLYPKYSNKVDNPIE.

The N-terminal stretch at 1 to 24 (MKKIMLVFITLILVSLPIAQQTEA) is a signal peptide. Residues 35 to 54 (SISSMAPPASPPASPKTPIE) form a disordered region. The next 4 beta stranded transmembrane spans lie at 214–227 (ESQL…AFKA), 234–243 (VNFGAISEGK), 312–321 (STKVKAAFDA), and 329–341 (SGDV…IKNS). Positions 483–493 (ECTGLAWEWWR) match the Conserved undecapeptide motif. The Cholesterol binding signature appears at 515-516 (TL).

This sequence belongs to the cholesterol-dependent cytolysin family. In terms of assembly, homooligomeric pore complex of 35 to 50 subunits; when inserted in the host membrane.

Its subcellular location is the secreted. The protein resides in the host membrane. It is found in the host cell membrane. With respect to regulation, activity of listeriolysin O is regulated on multiple levels. It should be high in the phagosome, thereby allowing escape of the bacteria from the phagosomal compartment. Then, once inside the host cytosol, the activity must be controlled to prevent lysis of the host plasma membrane and loss of the intracellular environment. A cholesterol-dependent toxin that causes cytolysis by forming pores in cholesterol containing host membranes. After binding to target membranes, the protein undergoes a major conformation change, leading to its insertion in the host membrane and formation of an oligomeric pore complex. Cholesterol is required for binding to host membranes, membrane insertion and pore formation; cholesterol binding is mediated by a Thr-Leu pair in the C-terminus. Acts as a major virulence factor required for the escape of bacteria from phagosomal vacuoles and entry into the host cytosol. Can be reversibly inactivated by oxidation. The chain is Listeriolysin O (hly) from Listeria monocytogenes serotype 1/2a (strain 08-5578).